The chain runs to 159 residues: Ribonuclease H (159 aa).

Positions 1–145 (MTHIRAIYTD…CDLIARRLSR (145 aa)) constitute an RNase H type-1 domain. Residues D10, E49, D74, and D137 each coordinate Mg(2+).

It belongs to the RNase H family. In terms of assembly, monomer. Requires Mg(2+) as cofactor.

It is found in the cytoplasm. The enzyme catalyses Endonucleolytic cleavage to 5'-phosphomonoester.. Functionally, endonuclease that specifically degrades the RNA of RNA-DNA hybrids. The sequence is that of Ribonuclease H from Thermosynechococcus vestitus (strain NIES-2133 / IAM M-273 / BP-1).